The chain runs to 349 residues: DNA polymerase IV (349 aa).

In terms of domain architecture, UmuC spans 7-188 (IIHIDMDYFF…LPVKKLFGVG (182 aa)). Positions 11 and 106 each coordinate Mg(2+). Glu-107 is a catalytic residue.

This sequence belongs to the DNA polymerase type-Y family. Monomer. It depends on Mg(2+) as a cofactor.

The protein localises to the cytoplasm. The catalysed reaction is DNA(n) + a 2'-deoxyribonucleoside 5'-triphosphate = DNA(n+1) + diphosphate. Poorly processive, error-prone DNA polymerase involved in untargeted mutagenesis. Copies undamaged DNA at stalled replication forks, which arise in vivo from mismatched or misaligned primer ends. These misaligned primers can be extended by PolIV. Exhibits no 3'-5' exonuclease (proofreading) activity. May be involved in translesional synthesis, in conjunction with the beta clamp from PolIII. The protein is DNA polymerase IV of Francisella tularensis subsp. novicida (strain U112).